Reading from the N-terminus, the 364-residue chain is BTB/POZ and TAZ domain-containing protein 2 (364 aa).

Residues 34–106 (SDVEIVTSDN…LYSSSLTEDE (73 aa)) form the BTB domain. The Nuclear localization signal motif lies at 203–212 (RKKRRRRHRK). The TAZ-type zinc-finger motif lies at 215-316 (DLYMQLSEAM…PDSCRVPLCR (102 aa)). The segment at 327 to 350 (KMGEDTKWKLLVTRVVSAKAMTSL) is caM-binding.

In terms of assembly, interacts with CUL3A. Interacts with GTE11/BET10 through the BTB domain. In terms of tissue distribution, preferentially expressed in young leaves and roots.

Its subcellular location is the nucleus. It localises to the cytoplasm. It participates in protein modification; protein ubiquitination. May act as a substrate-specific adapter of an E3 ubiquitin-protein ligase complex (CUL3-RBX1-BTB) which mediates the ubiquitination and subsequent proteasomal degradation of target proteins. Plays a key role as a component of the TAC1-mediated telomerase activation pathway certainly by targeting a telomerase repressor to degradation. Seems to occupy an integral position in a complex signaling network that perceives, integrates, and responds to multiple, and sometimes competing, signals. Enhances responses to auxin in postgermination and vegetative development. Also negatively regulates ABA- and sugar-mediated inhibition of the germination. Essential for female and male gametophyte development. The sequence is that of BTB/POZ and TAZ domain-containing protein 2 (BT2) from Arabidopsis thaliana (Mouse-ear cress).